A 511-amino-acid chain; its full sequence is uncharacterized protein (511 aa).

The CoA carboxyltransferase N-terminal domain maps to 2–254 (LMDYEKERTE…NFQEKAPIHE (253 aa)). The tract at residues 2 to 506 (LMDYEKERTE…KEMTFTNRKH (505 aa)) is carboxyltransferase. The CoA carboxyltransferase C-terminal domain occupies 260–506 (HFETPLADVI…KEMTFTNRKH (247 aa)).

Belongs to the AccD/PCCB family.

This is an uncharacterized protein from Bacillus subtilis (strain 168).